The following is a 673-amino-acid chain: UvrABC system protein B (673 aa).

The Helicase ATP-binding domain occupies E26–R183. ATP is bound at residue G39–T46. Positions Y92–V115 match the Beta-hairpin motif. One can recognise a Helicase C-terminal domain in the interval Q431–L597. The UVR domain occupies Q633–L668.

This sequence belongs to the UvrB family. In terms of assembly, forms a heterotetramer with UvrA during the search for lesions. Interacts with UvrC in an incision complex.

The protein localises to the cytoplasm. Functionally, the UvrABC repair system catalyzes the recognition and processing of DNA lesions. A damage recognition complex composed of 2 UvrA and 2 UvrB subunits scans DNA for abnormalities. Upon binding of the UvrA(2)B(2) complex to a putative damaged site, the DNA wraps around one UvrB monomer. DNA wrap is dependent on ATP binding by UvrB and probably causes local melting of the DNA helix, facilitating insertion of UvrB beta-hairpin between the DNA strands. Then UvrB probes one DNA strand for the presence of a lesion. If a lesion is found the UvrA subunits dissociate and the UvrB-DNA preincision complex is formed. This complex is subsequently bound by UvrC and the second UvrB is released. If no lesion is found, the DNA wraps around the other UvrB subunit that will check the other stand for damage. The chain is UvrABC system protein B from Enterobacter sp. (strain 638).